The following is a 380-amino-acid chain: MASLRKTHPLLKIVNDALVDLPTPINISTWWNFGSLLGLCLIAQILTGLFLAMHYTADIATAFSSVAHICRDVNYGWLIRNFHANGASFFFICLYLHVGRGLYYGSYLYKETWNIGVVLLLLVMMTAFVGYVLPWGQMSFWGATVITNLLSAVPYVGNTLVQWIWGGFSVDNATLTRFFAFHFLFPFIIAAMVILHLLFLHETGSSNPTGISSNADKIPFHPYFTYKDLFGFVILLLALSVLALFSPNLLGDPDNFIPANPLVTPPHIKPEWYFLFAYAILRSIPNKLGGVLALLASILILMVVPLLHTSKQRGLMFRPLTQILFWTLVADVAILTWIGGMPVEHPFITVGQVASVLYFALFLIFIPATGWAENKALKWN.

Helical transmembrane passes span 33-53 (FGSL…FLAM), 77-98 (WLIR…YLHV), 113-133 (WNIG…GYVL), and 178-198 (FFAF…LHLL). H83 and H97 together coordinate heme b. 2 residues coordinate heme b: H182 and H196. H201 is an a ubiquinone binding site. The next 4 helical transmembrane spans lie at 226–246 (YKDL…ALFS), 288–308 (LGGV…PLLH), 320–340 (LTQI…WIGG), and 347–367 (FITV…IFIP).

It belongs to the cytochrome b family. The cytochrome bc1 complex contains 3 respiratory subunits (MT-CYB, CYC1 and UQCRFS1), 2 core proteins (UQCRC1 and UQCRC2) and probably 6 low-molecular weight proteins. Heme b is required as a cofactor.

The protein resides in the mitochondrion inner membrane. Its function is as follows. Component of the ubiquinol-cytochrome c reductase complex (complex III or cytochrome b-c1 complex) that is part of the mitochondrial respiratory chain. The b-c1 complex mediates electron transfer from ubiquinol to cytochrome c. Contributes to the generation of a proton gradient across the mitochondrial membrane that is then used for ATP synthesis. This chain is Cytochrome b (mt-cyb), found in Neocyttus rhomboidalis (Spiky oreo dory).